The following is a 517-amino-acid chain: Acetyl-coenzyme A carboxylase carboxyl transferase subunit beta, chloroplastic (517 aa).

4 stretches are compositionally biased toward basic and acidic residues: residues 1 to 17, 24 to 41, 48 to 65, and 72 to 81; these read MKPTKPEGPKKPNKSNE, GDNKEDLEGPKKPNKSNE, and GDKQKDKKDG. Disordered stretches follow at residues 1-179 and 204-234; these read MKPT…KEEE and KHRDRKSVPAKERELVPAQSTKRDTDPDSEA. A compositionally biased stretch (acidic residues) spans 87–131; the sequence is YDDEYEEDLEYDDEYEEDLEYDDEYEEDLEYDDEEYDDEYEEDLE. 2 stretches are compositionally biased toward basic and acidic residues: residues 132–179 and 209–229; these read GDNK…KEEE and KSVPAKERELVPAQSTKRDTD. Residues 243-514 form the CoA carboxyltransferase N-terminal domain; sequence LWVHCKLCSG…NSQVINIYNY (272 aa). Residues cysteine 247, cysteine 250, cysteine 266, and cysteine 269 each contribute to the Zn(2+) site. The C4-type zinc-finger motif lies at 247–269; the sequence is CKLCSGFNYKKILKSKNNVCEQC.

Belongs to the AccD/PCCB family. Acetyl-CoA carboxylase is a heterohexamer composed of biotin carboxyl carrier protein, biotin carboxylase and 2 subunits each of ACCase subunit alpha and ACCase plastid-coded subunit beta (accD). Requires Zn(2+) as cofactor.

It is found in the plastid. It localises to the chloroplast stroma. It carries out the reaction N(6)-carboxybiotinyl-L-lysyl-[protein] + acetyl-CoA = N(6)-biotinyl-L-lysyl-[protein] + malonyl-CoA. It functions in the pathway lipid metabolism; malonyl-CoA biosynthesis; malonyl-CoA from acetyl-CoA: step 1/1. In terms of biological role, component of the acetyl coenzyme A carboxylase (ACC) complex. Biotin carboxylase (BC) catalyzes the carboxylation of biotin on its carrier protein (BCCP) and then the CO(2) group is transferred by the transcarboxylase to acetyl-CoA to form malonyl-CoA. The protein is Acetyl-coenzyme A carboxylase carboxyl transferase subunit beta, chloroplastic of Oenothera elata subsp. hookeri (Hooker's evening primrose).